The sequence spans 177 residues: B-phycoerythrin beta chain (177 aa).

Residues C50 and C61 each contribute to the phycourobilin site. N72 is subject to N4-methylasparagine. (2R,3E)-phycoerythrobilin is bound by residues C82 and C158.

The protein belongs to the phycobiliprotein family. As to quaternary structure, heteromer of 6 alpha, 6 beta and one gamma chain. In terms of processing, contains two covalently linked phycoerythrobilin chromophores and one covalently linked phycourobilin chromophore.

It is found in the plastid. It localises to the chloroplast thylakoid membrane. Its function is as follows. Light-harvesting photosynthetic bile pigment-protein from the phycobiliprotein complex. The protein is B-phycoerythrin beta chain (cpeB) of Rhodella violacea (Red alga).